Here is a 148-residue protein sequence, read N- to C-terminus: uncharacterized protein (148 aa).

Residues 37–94 (NNNNYNNNNKNNNNNNNNNNNNNNNNNNNNNNNYINSCNSNNNNNNNNNNTKNNNINS) are compositionally biased toward low complexity. The tract at residues 37–99 (NNNNYNNNNK…NNINSRTDKN (63 aa)) is disordered.

This is an uncharacterized protein from Dictyostelium discoideum (Social amoeba).